The primary structure comprises 465 residues: UDP-N-acetylmuramoylalanine--D-glutamate ligase (465 aa).

Residue 127-133 participates in ATP binding; that stretch reads GSNGKST.

The protein belongs to the MurCDEF family.

The protein localises to the cytoplasm. It catalyses the reaction UDP-N-acetyl-alpha-D-muramoyl-L-alanine + D-glutamate + ATP = UDP-N-acetyl-alpha-D-muramoyl-L-alanyl-D-glutamate + ADP + phosphate + H(+). Its pathway is cell wall biogenesis; peptidoglycan biosynthesis. Cell wall formation. Catalyzes the addition of glutamate to the nucleotide precursor UDP-N-acetylmuramoyl-L-alanine (UMA). The chain is UDP-N-acetylmuramoylalanine--D-glutamate ligase from Cereibacter sphaeroides (strain ATCC 17023 / DSM 158 / JCM 6121 / CCUG 31486 / LMG 2827 / NBRC 12203 / NCIMB 8253 / ATH 2.4.1.) (Rhodobacter sphaeroides).